The following is a 2291-amino-acid chain: Spectrin beta chain (2291 aa).

The segment at Met1–His271 is actin-binding. 2 consecutive Calponin-homology (CH) domains span residues Ser50–Gln154 and Lys169–Ser274. 17 Spectrin repeats span residues Val300 to Glu408, Ala420 to Glu521, Gln525 to Glu633, Lys636 to Asn739, Tyr743 to Leu843, Leu848 to Leu948, Val954 to Glu1057, Asp1060 to Ser1166, Asp1170 to Lys1272, Lys1276 to Leu1376, Gln1386 to Glu1484, Glu1488 to Glu1591, Lys1594 to Glu1697, Leu1701 to Leu1802, Glu1807 to Ala1909, Asp1913 to Gln2015, and Val2020 to Lys2089. Residues Glu2097–Arg2140 are compositionally biased toward basic and acidic residues. Positions Glu2097 to Gly2152 are disordered. Positions Gly2147–Asp2259 constitute a PH domain. Position 2195 is a phosphoserine (Ser2195). Positions Ala2262–Ser2275 are enriched in polar residues. The tract at residues Ala2262–Lys2291 is disordered.

Belongs to the spectrin family. In terms of assembly, native spectrin molecule is a tetramer composed of two antiparallel heterodimers joined head to head so that each end of the native molecule includes the C-terminus of the alpha subunit and the N-terminus of the beta subunit.

The protein resides in the cytoplasm. It is found in the cytoskeleton. It localises to the cell cortex. Spectrin is the major constituent of the cytoskeletal network underlying the erythrocyte plasma membrane. It associates with band 4.1 and actin to form the cytoskeletal superstructure of the erythrocyte plasma membrane. Interacts with calmodulin in a calcium-dependent manner. The chain is Spectrin beta chain (beta-Spec) from Drosophila melanogaster (Fruit fly).